The primary structure comprises 699 residues: Zinc finger protein 782 (699 aa).

Residues 8–79 (VSFQDVTVEF…EKEKGFLSRN (72 aa)) enclose the KRAB domain. The disordered stretch occupies residues 75 to 95 (FLSRNSPEDSQPDEISEKSPE). A C2H2-type 1; degenerate zinc finger spans residues 279-307 (CFCRITHKTLTGGKSFSQKSHIREHHRVH). The C2H2-type 2; degenerate zinc finger occupies 316–332 (GKSFNRNSTLPVHQRTH). A C2H2-type 3; degenerate zinc finger spans residues 337-360 (YSDYHPCTETFSYQSTFSVHQKVH). The C2H2-type 4; degenerate zinc-finger motif lies at 366-388 (YEYNECGKSCSMNSHLIWPQKSH). 11 C2H2-type zinc fingers span residues 394–416 (YECPECGKAFSEKSRLRKHQRTH), 422–444 (YKCDGCDKAFSAKSGLRIHQRTH), 450–472 (FECHECGKSFNYKSILIVHQRTH), 478–500 (FECNECGKSFSHMSGLRNHRRTH), 506–528 (YKCDECGKAFKLKSGLRKHHRTH), 534–556 (YKCNQCGKAFGQKSQLRGHHRIH), 562–584 (YKCNHCGEAFSQKSNLRVHHRTH), 590–612 (YQCEECGKTFRQKSNLRGHQRTH), 618–640 (YECNECGKAFSEKSVLRKHQRTH), 646–668 (YNCNQCGEAFSQKSNLRVHQRTH), and 674–696 (YKCDKCGRTFSQKSSLREHQKAH).

This sequence belongs to the krueppel C2H2-type zinc-finger protein family.

Its subcellular location is the nucleus. In terms of biological role, may be involved in transcriptional regulation. This is Zinc finger protein 782 (ZNF782) from Homo sapiens (Human).